The chain runs to 338 residues: UPF0284 protein TV0153 (338 aa).

The protein belongs to the UPF0284 family.

The protein is UPF0284 protein TV0153 of Thermoplasma volcanium (strain ATCC 51530 / DSM 4299 / JCM 9571 / NBRC 15438 / GSS1).